Consider the following 75-residue polypeptide: UPF0270 protein PputGB1_1339 (75 aa).

The protein belongs to the UPF0270 family.

This chain is UPF0270 protein PputGB1_1339, found in Pseudomonas putida (strain GB-1).